We begin with the raw amino-acid sequence, 493 residues long: Cysteine--tRNA ligase (493 aa).

Cysteine 29 lines the Zn(2+) pocket. The 'HIGH' region signature appears at 31 to 41 (PTVYDFAHIGN). Zn(2+) contacts are provided by cysteine 227, histidine 252, and glutamate 256. The short motif at 285–289 (KMSKS) is the 'KMSKS' region element. Lysine 288 provides a ligand contact to ATP.

Belongs to the class-I aminoacyl-tRNA synthetase family. Monomer. It depends on Zn(2+) as a cofactor.

It is found in the cytoplasm. It catalyses the reaction tRNA(Cys) + L-cysteine + ATP = L-cysteinyl-tRNA(Cys) + AMP + diphosphate. The chain is Cysteine--tRNA ligase from Rhodopseudomonas palustris (strain HaA2).